The chain runs to 306 residues: Voltage-dependent anion channel-forming protein RSc3414 (306 aa).

The next 4 membrane-spanning stretches (helical) occupy residues 28–48, 50–70, 213–233, and 239–259; these read LFLI…WLPI, VNLS…FLGF, YSVM…FGLV, and FTPV…AIAA.

This sequence belongs to the anion channel-forming bestrophin (TC 1.A.46) family.

It is found in the cell membrane. This Ralstonia nicotianae (strain ATCC BAA-1114 / GMI1000) (Ralstonia solanacearum) protein is Voltage-dependent anion channel-forming protein RSc3414.